Reading from the N-terminus, the 174-residue chain is Gamma-crystallin F (174 aa).

Beta/gamma crystallin 'Greek key' domains follow at residues 2–40 (GKIT…RVDS) and 41–83 (GCWM…RLIP). The segment at 84–87 (HTGS) is connecting peptide. 2 consecutive Beta/gamma crystallin 'Greek key' domains span residues 88 to 128 (HRLR…NVLE) and 129 to 171 (GWWV…RRAV).

Belongs to the beta/gamma-crystallin family.

Crystallins are the dominant structural components of the vertebrate eye lens. The protein is Gamma-crystallin F (CRYGF) of Bos taurus (Bovine).